Reading from the N-terminus, the 579-residue chain is Eukaryotic translation initiation factor 3 subunit D (579 aa).

3 disordered regions span residues 1–20 (MASF…GPAS), 51–72 (NASG…RARD), and 109–170 (RRGG…FGWK). Residues 51 to 64 (NASGASNDAANARG) are compositionally biased toward low complexity. Residues 120-167 (GGRGGRGGAGGAGAAGGRGASKFGAGAGRGARGGRGGAAGARRGGGRF) show a composition bias toward gly residues. Residues 307–321 (AFDYLTVNENAADPP) form an RNA gate region.

This sequence belongs to the eIF-3 subunit D family. As to quaternary structure, component of the eukaryotic translation initiation factor 3 (eIF-3) complex.

It localises to the cytoplasm. Functionally, mRNA cap-binding component of the eukaryotic translation initiation factor 3 (eIF-3) complex, which is involved in protein synthesis of a specialized repertoire of mRNAs and, together with other initiation factors, stimulates binding of mRNA and methionyl-tRNAi to the 40S ribosome. The eIF-3 complex specifically targets and initiates translation of a subset of mRNAs involved in cell proliferation. In the eIF-3 complex, eif3d specifically recognizes and binds the 7-methylguanosine cap of a subset of mRNAs. In Mycosarcoma maydis (Corn smut fungus), this protein is Eukaryotic translation initiation factor 3 subunit D.